A 267-amino-acid chain; its full sequence is Alkaline ceramidase 3 (267 aa).

At Met-1–Glu-33 the chain is on the cytoplasmic side. 5 residues coordinate Ca(2+): Asp-19, Trp-20, Glu-22, Asn-24, and Glu-33. Residues Phe-34–Val-55 traverse the membrane as a helical segment. Residues Arg-56 to Lys-61 are Lumenal-facing. Residues Arg-62–Met-82 traverse the membrane as a helical segment. His-81 lines the Zn(2+) pocket. At Thr-83–Glu-87 the chain is on the cytoplasmic side. Residues Met-88–Phe-108 traverse the membrane as a helical segment. Over Glu-109–Asn-118 the chain is Lumenal. Residues Tyr-119–Val-139 traverse the membrane as a helical segment. At Lys-140 to Glu-141 the chain is on the cytoplasmic side. A helical transmembrane segment spans residues Pro-142–Tyr-162. Residues Ile-163–Gly-173 lie on the Lumenal side of the membrane. The helical transmembrane segment at Leu-174–Ile-194 threads the bilayer. Over Phe-195–Gln-215 the chain is Cytoplasmic. The chain crosses the membrane as a helical span at residues Phe-216–Leu-236. Zn(2+)-binding residues include His-217 and His-221. The Lumenal portion of the chain corresponds to Tyr-237–His-267.

This sequence belongs to the alkaline ceramidase family. It depends on Zn(2+) as a cofactor. Ubiquitously expressed. Highly expressed in placenta. Expressed in erythrocytes.

It localises to the endoplasmic reticulum membrane. The protein localises to the golgi apparatus membrane. The enzyme catalyses an N-acyl-(4R)-4-hydroxysphinganine + H2O = (4R)-hydroxysphinganine + a fatty acid. It catalyses the reaction N-(5Z,8Z,11Z,14Z-eicosatetraenoyl)-sphing-4-enine + H2O = sphing-4-enine + (5Z,8Z,11Z,14Z)-eicosatetraenoate. It carries out the reaction N-(5Z,8Z,11Z,14Z-eicosatetraenoyl)-sphinganine + H2O = sphinganine + (5Z,8Z,11Z,14Z)-eicosatetraenoate. The catalysed reaction is N-(5Z,8Z,11Z,14Z-eicosatetraenoyl)-(4R)-hydroxysphinganine + H2O = (4R)-hydroxysphinganine + (5Z,8Z,11Z,14Z)-eicosatetraenoate. The enzyme catalyses N-(11Z-eicosenoyl)-sphing-4-enine + H2O = (11Z)-eicosenoate + sphing-4-enine. It catalyses the reaction N-(11Z-eicosenoyl)-sphinganine + H2O = (11Z)-eicosenoate + sphinganine. It carries out the reaction N-(11Z-eicosenoyl)-(4R)-hydroxysphinganine + H2O = (11Z)-eicosenoate + (4R)-hydroxysphinganine. The catalysed reaction is N-(9Z-octadecenoyl)-sphing-4-enine + H2O = sphing-4-enine + (9Z)-octadecenoate. The enzyme catalyses N-(9Z-octadecenoyl)-sphinganine + H2O = sphinganine + (9Z)-octadecenoate. It catalyses the reaction N-(9Z-octadecenoyl)-(4R)-hydroxysphinganine + H2O = (4R)-hydroxysphinganine + (9Z)-octadecenoate. It carries out the reaction an N-acylsphing-4-enine + H2O = sphing-4-enine + a fatty acid. The catalysed reaction is an N-acylsphinganine + H2O = sphinganine + a fatty acid. The protein operates within lipid metabolism; sphingolipid metabolism. Activated by 5 mM Ca(2+) and inhibited by 5 mM Zn(2+). Functionally, endoplasmic reticulum and Golgi ceramidase that catalyzes the hydrolysis of unsaturated long-chain C18:1-, C20:1- and C20:4-ceramides, dihydroceramides and phytoceramides into sphingoid bases like sphingosine and free fatty acids at alkaline pH. Ceramides, sphingosine, and its phosphorylated form sphingosine-1-phosphate are bioactive lipids that mediate cellular signaling pathways regulating several biological processes including cell proliferation, apoptosis and differentiation. Controls the generation of sphingosine in erythrocytes, and thereby sphingosine-1-phosphate in plasma. Through the regulation of ceramides and sphingosine-1-phosphate homeostasis in the brain may play a role in neurons survival and function. By regulating the levels of pro-inflammatory ceramides in immune cells and tissues, may modulate the inflammatory response. The chain is Alkaline ceramidase 3 (ACER3) from Homo sapiens (Human).